The chain runs to 60 residues: Antimicrobial peptide Eval151 (60 aa).

The signal sequence occupies residues Met1–Cys23. The residue at position 36 (Arg36) is an Arginine amide. The span at Arg36–His54 shows a compositional bias: basic and acidic residues. A disordered region spans residues Arg36–Lys60. Positions Gly37–Lys60 are excised as a propeptide.

Belongs to the non-disulfide-bridged peptide (NDBP) superfamily. In terms of tissue distribution, expressed by the venom gland.

Its subcellular location is the secreted. Functionally, probable antimicrobial peptide. Has no inhibitory activity against herpes simplex virus type 1 (HSV-1). The polypeptide is Antimicrobial peptide Eval151 (Euscorpiops validus (Scorpion)).